A 353-amino-acid chain; its full sequence is Photosystem II protein D1 (353 aa).

N-acetylthreonine is present on Thr-2. Thr-2 carries the post-translational modification Phosphothreonine. 3 helical membrane-spanning segments follow: residues 29 to 46 (YIGW…TATS), 118 to 133 (HFLL…EWEL), and 142 to 156 (WIAV…AATA). Residue His-118 coordinates chlorophyll a. Residue Tyr-126 coordinates pheophytin a. [CaMn4O5] cluster contacts are provided by Asp-170 and Glu-189. The helical transmembrane segment at 197 to 218 (FHMLGVAGVFGGSLFSAMHGSL) threads the bilayer. His-198 is a binding site for chlorophyll a. Residues His-215 and 264-265 (SF) each bind a quinone. His-215 serves as a coordination point for Fe cation. Residue His-272 coordinates Fe cation. Residues 274–288 (FLAAWPVVGIWFTAL) form a helical membrane-spanning segment. Residues His-332, Glu-333, Asp-342, and Ala-344 each contribute to the [CaMn4O5] cluster site. Residues 345–353 (AVEAPSING) constitute a propeptide that is removed on maturation.

Belongs to the reaction center PufL/M/PsbA/D family. In terms of assembly, PSII is composed of 1 copy each of membrane proteins PsbA, PsbB, PsbC, PsbD, PsbE, PsbF, PsbH, PsbI, PsbJ, PsbK, PsbL, PsbM, PsbT, PsbX, PsbY, PsbZ, Psb30/Ycf12, at least 3 peripheral proteins of the oxygen-evolving complex and a large number of cofactors. It forms dimeric complexes. Requires The D1/D2 heterodimer binds P680, chlorophylls that are the primary electron donor of PSII, and subsequent electron acceptors. It shares a non-heme iron and each subunit binds pheophytin, quinone, additional chlorophylls, carotenoids and lipids. D1 provides most of the ligands for the Mn4-Ca-O5 cluster of the oxygen-evolving complex (OEC). There is also a Cl(-1) ion associated with D1 and D2, which is required for oxygen evolution. The PSII complex binds additional chlorophylls, carotenoids and specific lipids. as cofactor. Post-translationally, tyr-161 forms a radical intermediate that is referred to as redox-active TyrZ, YZ or Y-Z. In terms of processing, C-terminally processed by CTPA; processing is essential to allow assembly of the oxygen-evolving complex and thus photosynthetic growth.

The protein resides in the plastid. It localises to the chloroplast thylakoid membrane. The catalysed reaction is 2 a plastoquinone + 4 hnu + 2 H2O = 2 a plastoquinol + O2. In terms of biological role, photosystem II (PSII) is a light-driven water:plastoquinone oxidoreductase that uses light energy to abstract electrons from H(2)O, generating O(2) and a proton gradient subsequently used for ATP formation. It consists of a core antenna complex that captures photons, and an electron transfer chain that converts photonic excitation into a charge separation. The D1/D2 (PsbA/PsbD) reaction center heterodimer binds P680, the primary electron donor of PSII as well as several subsequent electron acceptors. The chain is Photosystem II protein D1 from Lotus japonicus (Lotus corniculatus var. japonicus).